The primary structure comprises 389 residues: Teichoic acid ribitol-phosphate primase (389 aa).

It belongs to the CDP-glycerol glycerophosphotransferase family.

It is found in the cell membrane. It carries out the reaction 4-O-[(2R)-glycerylphospho]-N-acetyl-beta-D-mannosaminyl-(1-&gt;4)-N-acetyl-alpha-D-glucosaminyl di-trans,octa-cis-undecaprenyl diphosphate + CDP-L-ribitol = 4-O-[1-D-ribitylphospho-(2R)-1-glycerylphospho]-N-acetyl-beta-D-mannosaminyl-(1-&gt;4)-N-acetyl-alpha-D-glucosaminyl di-trans,octa-cis-undecaprenyl diphosphate + CMP + H(+). It participates in cell wall biogenesis; poly(ribitol phosphate) teichoic acid biosynthesis. Catalyzes the addition of a single ribitol phosphate unit onto the glycerol phosphate of the linkage unit, as a primer for polymerisation by TarL. In Bacillus spizizenii (strain ATCC 23059 / NRRL B-14472 / W23) (Bacillus subtilis subsp. spizizenii), this protein is Teichoic acid ribitol-phosphate primase (tarK).